Consider the following 25-residue polypeptide: Caerin-1.19 (25 aa).

The residue at position 25 (Leu-25) is a Leucine amide.

It belongs to the frog skin active peptide (FSAP) family. Caerin subfamily. As to expression, expressed by the skin dorsal glands.

It localises to the secreted. In terms of biological role, caerin-1.19 shows significant activity against Gram-positive organisms, but is less effective against Gram-negative organisms. This chain is Caerin-1.19, found in Ranoidea gracilenta (Dainty green tree frog).